The following is a 510-amino-acid chain: Sucrose transport protein SUC4 (510 aa).

Residues 1–34 are disordered; sequence MATSDQDRRHRVTRNRPPIARPSTSSSRPVVSPP. Topologically, residues 1–45 are cytoplasmic; sequence MATSDQDRRHRVTRNRPPIARPSTSSSRPVVSPPRSKVSKRVLLR. A compositionally biased stretch (low complexity) spans 21–34; it reads RPSTSSSRPVVSPP. S23 bears the Phosphoserine mark. A helical transmembrane segment spans residues 46 to 66; it reads VASVACGIQFGWALQLSLLTP. Over 67-71 the chain is Extracellular; it reads YVQEL. The helical transmembrane segment at 72–92 threads the bilayer; sequence GIPHAWASVIWLCGPLSGLFV. Over 93–111 the chain is Cytoplasmic; it reads QPLVGHSSDRCTSKYGRRR. The helical transmembrane segment at 112–132 threads the bilayer; the sequence is PFIVAGAVAISISVMVIGHAA. The Extracellular portion of the chain corresponds to 133 to 148; it reads DIGWAFGDREGKIKPR. A helical membrane pass occupies residues 149-169; that stretch reads AIVAFVLGFWILDVANNMTQG. Residues 170 to 187 lie on the Cytoplasmic side of the membrane; the sequence is PCRALLADLTENDNRRTR. The helical transmembrane segment at 188–208 threads the bilayer; it reads VANGYFSLFMAVGNVLGYATG. Residues 209–233 are Extracellular-facing; the sequence is SYNGWYKIFTFTKTVACNVECANLK. A helical transmembrane segment spans residues 234-254; that stretch reads SAFYIDVVFIAITTILSVSAA. Residues 255 to 291 are Cytoplasmic-facing; it reads HEVPLASLASEAHGQTSGTDEAFLSEIFGTFRYFPGN. Residues 292–312 form a helical membrane-spanning segment; that stretch reads VWIILLVTALTWIGWFPFILF. The Extracellular portion of the chain corresponds to 313–335; sequence DTDWMGREIYGGEPNIGTSYSAG. Residues 336–356 form a helical membrane-spanning segment; it reads VSMGALGLMLNSVFLGITSVL. At 357–365 the chain is on the cytoplasmic side; that stretch reads MEKLCRKWG. Residues 366-386 form a helical membrane-spanning segment; it reads AGFVWGISNILMAICFLGMII. Over 387-402 the chain is Extracellular; sequence TSFVASHLGYIGHEQP. The helical transmembrane segment at 403–423 threads the bilayer; sequence PASIVFAAVLIFTILGIPLAI. Residues 424-443 are Cytoplasmic-facing; sequence TYSVPYALISIRIESLGLGQ. Residues 444–464 form a helical membrane-spanning segment; the sequence is GLSLGVLNLAIVIPQVIVSVG. Over 465–477 the chain is Extracellular; it reads SGPWDQLFGGGNS. A helical transmembrane segment spans residues 478–498; that stretch reads PALAVGAATGFIGGIVAILAL. Topologically, residues 499 to 510 are cytoplasmic; sequence PRTRIQKPIPLP.

It belongs to the glycoside-pentoside-hexuronide (GPH) cation symporter transporter (TC 2.A.2.4) family. In terms of assembly, homodimer. Interacts with SUC2 and SUC3. Expressed in sink tissues, mostly in minor veins of sink leaves. Localized in companion cells.

Its subcellular location is the cell membrane. It catalyses the reaction sucrose(out) + H(+)(out) = sucrose(in) + H(+)(in). It functions in the pathway glycan biosynthesis; sucrose metabolism. Its function is as follows. Responsible for the transport of sucrose into the cell, with the concomitant uptake of protons (symport system). Can also transport maltose at a lesser rate. May also transport biotin. The polypeptide is Sucrose transport protein SUC4 (Arabidopsis thaliana (Mouse-ear cress)).